A 280-amino-acid polypeptide reads, in one-letter code: Cell envelope integrity protein EipB (280 aa).

The N-terminal stretch at 1–24 (MRFVRIAAAASGATVFMWAGFAGA) is a signal peptide. Residues Cys69 and Cys278 are joined by a disulfide bond.

As to quaternary structure, monomer.

The protein resides in the periplasm. In terms of biological role, functions in the periplasm to maintain cell envelope integrity. The protein is Cell envelope integrity protein EipB of Brucella abortus (strain 2308).